The sequence spans 109 residues: uncharacterized protein (109 aa).

This is an uncharacterized protein from Microplitis demolitor bracovirus (isolate Webb) (MdBV).